The chain runs to 272 residues: Small ribosomal subunit protein mS23 (272 aa).

Residues 233–272 are disordered; that stretch reads KENASKAAGDASAVSSEKQVEDDVVNFDESTDADQEVLHF. A compositionally biased stretch (acidic residues) spans 252 to 272; it reads VEDDVVNFDESTDADQEVLHF.

This sequence belongs to the mitochondrion-specific ribosomal protein mS23 family. As to quaternary structure, component of the mitochondrial small ribosomal subunit.

The protein localises to the mitochondrion. The chain is Small ribosomal subunit protein mS23 (RSM25) from Candida glabrata (strain ATCC 2001 / BCRC 20586 / JCM 3761 / NBRC 0622 / NRRL Y-65 / CBS 138) (Yeast).